A 134-amino-acid chain; its full sequence is Putative membrane protein insertion efficiency factor (134 aa).

The protein belongs to the UPF0161 family.

The protein resides in the cell inner membrane. Its function is as follows. Could be involved in insertion of integral membrane proteins into the membrane. The chain is Putative membrane protein insertion efficiency factor from Rhizobium etli (strain ATCC 51251 / DSM 11541 / JCM 21823 / NBRC 15573 / CFN 42).